A 268-amino-acid chain; its full sequence is Phosphatidylglycerol--prolipoprotein diacylglyceryl transferase (268 aa).

Transmembrane regions (helical) follow at residues 14–34, 57–77, 90–110, and 117–137; these read LGPI…FAGW, LTFY…IIFY, FFLW…LIAF, and IGAN…IGLG. Residue Arg-140 coordinates a 1,2-diacyl-sn-glycero-3-phospho-(1'-sn-glycerol). Transmembrane regions (helical) follow at residues 174-194, 200-220, and 238-258; these read QLFE…LVTI, YLVL…CEFF, and GQIL…AVFI.

It belongs to the Lgt family.

The protein localises to the cell inner membrane. It catalyses the reaction L-cysteinyl-[prolipoprotein] + a 1,2-diacyl-sn-glycero-3-phospho-(1'-sn-glycerol) = an S-1,2-diacyl-sn-glyceryl-L-cysteinyl-[prolipoprotein] + sn-glycerol 1-phosphate + H(+). It participates in protein modification; lipoprotein biosynthesis (diacylglyceryl transfer). Catalyzes the transfer of the diacylglyceryl group from phosphatidylglycerol to the sulfhydryl group of the N-terminal cysteine of a prolipoprotein, the first step in the formation of mature lipoproteins. This Francisella tularensis subsp. holarctica (strain FTNF002-00 / FTA) protein is Phosphatidylglycerol--prolipoprotein diacylglyceryl transferase.